Reading from the N-terminus, the 753-residue chain is 5-methyltetrahydropteroyltriglutamate--homocysteine methyltransferase (753 aa).

5-methyltetrahydropteroyltri-L-glutamate-binding positions include 17-20 (RELK) and lysine 117. L-homocysteine contacts are provided by residues 431 to 433 (IGS) and glutamate 484. Residues 431–433 (IGS) and glutamate 484 contribute to the L-methionine site. Residues 515–516 (RC) and tryptophan 561 contribute to the 5-methyltetrahydropteroyltri-L-glutamate site. Aspartate 599 contacts L-homocysteine. Aspartate 599 provides a ligand contact to L-methionine. Glutamate 605 contributes to the 5-methyltetrahydropteroyltri-L-glutamate binding site. 3 residues coordinate Zn(2+): histidine 641, cysteine 643, and glutamate 665. Residue histidine 694 is the Proton donor of the active site. Cysteine 726 contacts Zn(2+).

This sequence belongs to the vitamin-B12 independent methionine synthase family. It depends on Zn(2+) as a cofactor.

It carries out the reaction 5-methyltetrahydropteroyltri-L-glutamate + L-homocysteine = tetrahydropteroyltri-L-glutamate + L-methionine. It functions in the pathway amino-acid biosynthesis; L-methionine biosynthesis via de novo pathway; L-methionine from L-homocysteine (MetE route): step 1/1. Functionally, catalyzes the transfer of a methyl group from 5-methyltetrahydrofolate to homocysteine resulting in methionine formation. In Shigella boydii serotype 18 (strain CDC 3083-94 / BS512), this protein is 5-methyltetrahydropteroyltriglutamate--homocysteine methyltransferase.